Reading from the N-terminus, the 459-residue chain is Trigger factor (459 aa).

The region spanning 166-245 is the PPIase FKBP-type domain; the sequence is GDFANIDLTA…VNSVKAEELP (80 aa).

The protein belongs to the FKBP-type PPIase family. Tig subfamily.

Its subcellular location is the cytoplasm. The enzyme catalyses [protein]-peptidylproline (omega=180) = [protein]-peptidylproline (omega=0). Involved in protein export. Acts as a chaperone by maintaining the newly synthesized protein in an open conformation. Functions as a peptidyl-prolyl cis-trans isomerase. The polypeptide is Trigger factor (Bifidobacterium longum (strain NCC 2705)).